Reading from the N-terminus, the 103-residue chain is Sperm-associated antigen 11A (103 aa).

The N-terminal stretch at 1-24 (MRQRLLPSVTSLLLVALLFPGSSQ) is a signal peptide. Residue N29 is glycosylated (N-linked (GlcNAc...) asparagine).

This sequence belongs to the SPAG11 family.

It localises to the secreted. In terms of biological role, has antimicrobial activity against E.coli. Plays a role in the defense response in the male reproductive tract, contributing to sperm maturation, storage and protection. In Pan troglodytes (Chimpanzee), this protein is Sperm-associated antigen 11A.